The following is a 592-amino-acid chain: V-type ATP synthase alpha chain (592 aa).

232–239 (GPFGAGKT) is a binding site for ATP.

It belongs to the ATPase alpha/beta chains family.

The enzyme catalyses ATP + H2O + 4 H(+)(in) = ADP + phosphate + 5 H(+)(out). In terms of biological role, produces ATP from ADP in the presence of a proton gradient across the membrane. The V-type alpha chain is a catalytic subunit. This Clostridium botulinum (strain Eklund 17B / Type B) protein is V-type ATP synthase alpha chain.